A 553-amino-acid chain; its full sequence is Undecaprenyl phosphate-alpha-4-amino-4-deoxy-L-arabinose arabinosyl transferase (553 aa).

Transmembrane regions (helical) follow at residues 6–26 (ACKV…LLPL), 89–109 (FGSV…AMMM), 115–135 (IAFA…IGTY), 180–200 (FMTK…PIVI), 208–228 (IVCF…PWVI), 258–278 (IAPF…WLGL), 293–313 (NPEM…FSIA), 317–337 (LPTY…KFGV), 352–372 (GMVN…MEVV), 386–406 (WVLA…CFAL), and 410–430 (YWLL…HALP).

Belongs to the glycosyltransferase 83 family.

It localises to the cell inner membrane. It catalyses the reaction 4-amino-4-deoxy-alpha-L-arabinopyranosyl di-trans,octa-cis-undecaprenyl phosphate + lipid IVA = lipid IIA + di-trans,octa-cis-undecaprenyl phosphate.. Its pathway is lipopolysaccharide metabolism; 4-amino-4-deoxy-beta-L-arabinose-lipid A biosynthesis. Catalyzes the transfer of the L-Ara4N moiety of the glycolipid undecaprenyl phosphate-alpha-L-Ara4N to lipid A. The modified arabinose is attached to lipid A and is required for resistance to polymyxin and cationic antimicrobial peptides. This chain is Undecaprenyl phosphate-alpha-4-amino-4-deoxy-L-arabinose arabinosyl transferase (arnT), found in Photorhabdus laumondii subsp. laumondii (strain DSM 15139 / CIP 105565 / TT01) (Photorhabdus luminescens subsp. laumondii).